We begin with the raw amino-acid sequence, 611 residues long: Alpha-1,2-mannosyltransferase ALG9 (611 aa).

A compositionally biased stretch (basic residues) spans 1–10; the sequence is MASRRARQRL. Positions 1–51 are disordered; that stretch reads MASRRARQRLKGGGGGGGGGGDAGPAAEKLEQLGSREAGAEPRPESGNKAG. The Lumenal portion of the chain corresponds to 1 to 135; that stretch reads MASRRARQRL…FHARILQTNK (135 aa). Over residues 11–23 the composition is skewed to gly residues; it reads KGGGGGGGGGGDA. Residue N77 is glycosylated (N-linked (GlcNAc...) asparagine). A helical membrane pass occupies residues 136–156; that stretch reads ILVFYFLRCLLAFVSCVCELY. At 157-171 the chain is on the cytoplasmic side; it reads FYKAVCKKFGLHVSR. A helical transmembrane segment spans residues 172–192; the sequence is MMLAFLVLSTGMFCSSSAFLP. The Lumenal portion of the chain corresponds to 193–213; the sequence is SSFCMYTTLIAMTGWYMDKTP. Residues 214–234 form a helical membrane-spanning segment; sequence IAVLGVAAGAILGWPFSAALG. The Cytoplasmic portion of the chain corresponds to 235–249; sequence LPIAFDLLARKHRWK. A helical transmembrane segment spans residues 250-270; it reads SFLLWSLVALALFLVPVVVID. Residues 271-310 are Lumenal-facing; the sequence is SYYYGKLVVAPLNIVLYNVFTSHGPDLYGTEPWYFYLING. The chain crosses the membrane as a helical span at residues 311 to 331; sequence FLNFNVAFALALLVLPLTFLM. Residues 332-342 are Cytoplasmic-facing; that stretch reads EYLLQRFHVQN. A helical membrane pass occupies residues 343–363; sequence LGHPYWLTLAPMYIWFIIFFI. Over 364–370 the chain is Lumenal; that stretch reads QPHKEER. Residues 371–391 traverse the membrane as a helical segment; it reads FLFPVYPLICLCGAVALSALQ. Residues 392–405 lie on the Cytoplasmic side of the membrane; it reads KCYHFVFQRYRLEH. The helical transmembrane segment at 406-426 threads the bilayer; it reads YTVTSNWLALGTVFLFGLLSF. Over 427–611 the chain is Lumenal; the sequence is SRSVALFRGY…AKPSRKKSGG (185 aa). N550 and N593 each carry an N-linked (GlcNAc...) asparagine glycan.

It belongs to the glycosyltransferase 22 family.

Its subcellular location is the endoplasmic reticulum membrane. The enzyme catalyses an alpha-D-Man-(1-&gt;2)-alpha-D-Man-(1-&gt;2)-alpha-D-Man-(1-&gt;3)-[alpha-D-Man-(1-&gt;3)-alpha-D-Man-(1-&gt;6)]-beta-D-Man-(1-&gt;4)-beta-D-GlcNAc-(1-&gt;4)-alpha-D-GlcNAc-diphospho-di-trans,poly-cis-dolichol + a di-trans,poly-cis-dolichyl beta-D-mannosyl phosphate = an alpha-D-Man-(1-&gt;2)-alpha-D-Man-(1-&gt;2)-alpha-D-Man-(1-&gt;3)-[alpha-D-Man-(1-&gt;2)-alpha-D-Man-(1-&gt;3)-alpha-D-Man-(1-&gt;6)]-beta-D-Man-(1-&gt;4)-beta-D-GlcNAc-(1-&gt;4)-alpha-D-GlcNAc-diphospho-di-trans,poly-cis-dolichol + a di-trans,poly-cis-dolichyl phosphate + H(+). It catalyses the reaction an alpha-D-Man-(1-&gt;2)-alpha-D-Man-(1-&gt;2)-alpha-D-Man-(1-&gt;3)-[alpha-D-Man-(1-&gt;2)-alpha-D-Man-(1-&gt;3)-[alpha-D-Man-(1-&gt;6)]-alpha-D-Man-(1-&gt;6)]-beta-D-Man-(1-&gt;4)-beta-D-GlcNAc-(1-&gt;4)-alpha-D-GlcNAc-diphospho-di-trans,poly-cis-dolichol + a di-trans,poly-cis-dolichyl beta-D-mannosyl phosphate = an alpha-D-Man-(1-&gt;2)-alpha-D-Man-(1-&gt;2)-alpha-D-Man-(1-&gt;3)-[alpha-D-Man-(1-&gt;2)-alpha-D-Man-(1-&gt;3)-[alpha-D-Man-(1-&gt;2)-alpha-D-Man-(1-&gt;6)]-alpha-D-Man-(1-&gt;6)]-beta-D-Man-(1-&gt;4)-beta-D-GlcNAc-(1-&gt;4)-alpha-D-GlcNAc-diphospho-di-trans,poly-cis-dolichol + a di-trans,poly-cis-dolichyl phosphate + H(+). Its pathway is protein modification; protein glycosylation. In terms of biological role, mannosyltransferase that operates in the biosynthetic pathway of dolichol-linked oligosaccharides, the glycan precursors employed in protein asparagine (N)-glycosylation. The assembly of dolichol-linked oligosaccharides begins on the cytosolic side of the endoplasmic reticulum membrane and finishes in its lumen. The sequential addition of sugars to dolichol pyrophosphate produces dolichol-linked oligosaccharides containing fourteen sugars, including two GlcNAcs, nine mannoses and three glucoses. Once assembled, the oligosaccharide is transferred from the lipid to nascent proteins by oligosaccharyltransferases. In the lumen of the endoplasmic reticulum, catalyzes the addition of the seventh and ninth alpha-1,2-linked mannose residues to Man(6)GlcNAc(2)-PP-dolichol and Man(8)GlcNAc(2)-PP-dolichol respectively. The sequence is that of Alpha-1,2-mannosyltransferase ALG9 from Mus musculus (Mouse).